Here is a 510-residue protein sequence, read N- to C-terminus: Glycerol kinase (510 aa).

T12 is an ADP binding site. Residues T12, T13, and S14 each contribute to the ATP site. A sn-glycerol 3-phosphate-binding site is contributed by T12. R16 lines the ADP pocket. R82, E83, and Y134 together coordinate sn-glycerol 3-phosphate. R82, E83, and Y134 together coordinate glycerol. H230 bears the Phosphohistidine; by HPr mark. Residue D244 participates in sn-glycerol 3-phosphate binding. Glycerol contacts are provided by D244 and Q245. 2 residues coordinate ADP: T266 and G309. The ATP site is built by T266, G309, Q313, and G410. ADP-binding residues include G410 and N414.

Belongs to the FGGY kinase family. Homotetramer and homodimer (in equilibrium). In terms of processing, the phosphoenolpyruvate-dependent sugar phosphotransferase system (PTS), including enzyme I, and histidine-containing protein (HPr) are required for the phosphorylation, which leads to the activation of the enzyme.

It carries out the reaction glycerol + ATP = sn-glycerol 3-phosphate + ADP + H(+). It participates in polyol metabolism; glycerol degradation via glycerol kinase pathway; sn-glycerol 3-phosphate from glycerol: step 1/1. Its activity is regulated as follows. Activated by phosphorylation and inhibited by fructose 1,6-bisphosphate (FBP). Its function is as follows. Key enzyme in the regulation of glycerol uptake and metabolism. Catalyzes the phosphorylation of glycerol to yield sn-glycerol 3-phosphate. The polypeptide is Glycerol kinase (Bacillus cereus (strain ATCC 10987 / NRS 248)).